Here is a 269-residue protein sequence, read N- to C-terminus: MLGLQIFTLLSIPTLLYTYELELLDLTRTPPEKELEYWCTYANHCRFCWDCQDGICRNKVFENHSPILENDYIANCSVFRRNEFCTYYVTSIKPHEVYRTECPQQSHEWHEAVIRKWQKLLTYGFYLVGCVLVANYVRKRSLQTVMYLLVLLVIFFLLSQLMLYRELEDKKHKIGSIPPKRELEHWCTHGKYCDFCWDCQNGICRNKVFKNHPPIGENDFIRHDCWTIHLSNKCYYQKIYKYPDYHMMECSQPTPYKWYDNLMKKQDIM.

Positions 1–26 (MLGLQIFTLLSIPTLLYTYELELLDL) are cleaved as a signal peptide. One copy of the A repeat lies at 1–145 (MLGLQIFTLL…YVRKRSLQTV (145 aa)). At 27 to 116 (TRTPPEKELE…HEWHEAVIRK (90 aa)) the chain is on the extracellular side. Asn-75 carries an N-linked (GlcNAc...) asparagine; by host glycan. Residues 117-137 (WQKLLTYGFYLVGCVLVANYV) form a helical membrane-spanning segment. Topologically, residues 138–144 (RKRSLQT) are cytoplasmic. Residues 145 to 165 (VMYLLVLLVIFFLLSQLMLYR) form a helical membrane-spanning segment. The B repeat unit spans residues 147-269 (YLLVLLVIFF…DNLMKKQDIM (123 aa)). Over 166–269 (ELEDKKHKIG…DNLMKKQDIM (104 aa)) the chain is Extracellular.

It belongs to the asfivirus MGF 110 family.

It is found in the host membrane. Its function is as follows. Plays a role in virus cell tropism, and may be required for efficient virus replication in macrophages. The protein is Protein MGF 110-1L of African swine fever virus (isolate Warthog/Namibia/Wart80/1980) (ASFV).